Here is a 194-residue protein sequence, read N- to C-terminus: Lysozyme g (194 aa).

Catalysis depends on residues E71 and D84.

This sequence belongs to the glycosyl hydrolase 23 family. Expressed in intestine, liver, spleen, anterior kidney, posterior kidney, heart, gill, muscle and leukocytes.

The catalysed reaction is Hydrolysis of (1-&gt;4)-beta-linkages between N-acetylmuramic acid and N-acetyl-D-glucosamine residues in a peptidoglycan and between N-acetyl-D-glucosamine residues in chitodextrins.. Has lytic activity against M.lysodeikticus, V.alginolyticus from Epinephelus fario, V.vulnificus from culture water, A.hydrophila from soft-shell turtle, A.hydrophila from goldfish and V.parahaemolyticus, P.fluorescens and V.fluvialis from culture water. The polypeptide is Lysozyme g (Epinephelus coioides (Orange-spotted grouper)).